The primary structure comprises 1128 residues: Scavenger receptor cysteine-rich domain superfamily protein (1128 aa).

An N-terminal signal peptide occupies residues 1–24 (MTSLRRGNICWVAVCAALLTLTRG). Topologically, residues 25–1051 (IDVIAKPSRT…VGAQAGPAGG (1027 aa)) are extracellular. SRCR domains are found at residues 40 to 140 (VQLV…VVCN), 143 to 245 (VRLA…VICT), 248 to 348 (IRLV…VICT), 351 to 450 (VRLV…AKCQ), 453 to 553 (VQLV…VVCR), 555 to 654 (IRLA…VVCR), 657 to 757 (LRLA…VVCT), 759 to 866 (LRLT…VLCK), and 868 to 968 (IRLV…VQCK). Cystine bridges form between cysteine 65–cysteine 129, cysteine 78–cysteine 139, cysteine 109–cysteine 119, cysteine 168–cysteine 234, cysteine 181–cysteine 244, cysteine 212–cysteine 222, cysteine 273–cysteine 337, cysteine 286–cysteine 347, cysteine 316–cysteine 326, cysteine 376–cysteine 439, cysteine 389–cysteine 449, cysteine 419–cysteine 429, cysteine 478–cysteine 542, cysteine 491–cysteine 552, cysteine 522–cysteine 532, cysteine 583–cysteine 644, cysteine 596–cysteine 653, cysteine 624–cysteine 634, cysteine 682–cysteine 746, cysteine 695–cysteine 756, and cysteine 726–cysteine 736. Residue asparagine 87 is glycosylated (N-linked (GlcNAc...) asparagine). Asparagine 190 and asparagine 194 each carry an N-linked (GlcNAc...) asparagine glycan. Asparagine 229 carries an N-linked (GlcNAc...) asparagine glycan. Asparagine 422 is a glycosylation site (N-linked (GlcNAc...) asparagine). N-linked (GlcNAc...) asparagine glycosylation is found at asparagine 601 and asparagine 612. Residues asparagine 765, asparagine 808, asparagine 834, and asparagine 936 are each glycosylated (N-linked (GlcNAc...) asparagine). Intrachain disulfides connect cysteine 803–cysteine 865, cysteine 833–cysteine 843, cysteine 906–cysteine 967, cysteine 937–cysteine 947, cysteine 971–cysteine 1013, and cysteine 999–cysteine 1026. Residues 969-1028 (AGCDWPGPIRHGSFSPNRSSYDPLTTIDVKCDAGYELMGSKTLQCVTGCDWSRPTPECQR) enclose the Sushi domain. N-linked (GlcNAc...) asparagine glycosylation occurs at asparagine 985. N-linked (GlcNAc...) asparagine glycosylation is present at asparagine 1031. The helical transmembrane segment at 1052-1072 (VMLIIGIILGAVVMMLIACVA) threads the bilayer. Residues 1073 to 1128 (LYLKGRNKNIGRGNPATTSAIWKPKKEFDELKEPVLSFSAMTAGGAGPEDGMGEDI) are Cytoplasmic-facing.

From the mid-gastrula stage, expressed only in mesenchyme cells that are migrating toward the body wall. At the brachiolaria stage, expressed in presumptive coelomocytes of the coelomic pouch. Also expressed in adult coelomocytes (at protein level).

Its subcellular location is the cytoplasmic vesicle membrane. In terms of biological role, involved in aggregate formation and phagocytosis by larval mesenchyme cells and adult coelomocytes. Binds to bacteria and may act as an opsonin in the innate immune system. This is Scavenger receptor cysteine-rich domain superfamily protein from Patiria pectinifera (Starfish).